Here is a 241-residue protein sequence, read N- to C-terminus: Purine nucleoside phosphorylase DeoD-type 1 (241 aa).

His-5 lines the a purine D-ribonucleoside pocket. Residues Gly-21, Arg-25, Arg-44, and 88-91 (RVGS) each bind phosphate. Residues 180–182 (EME) and 204–205 (SD) contribute to the a purine D-ribonucleoside site. Asp-205 (proton donor) is an active-site residue.

It belongs to the PNP/UDP phosphorylase family. As to quaternary structure, homohexamer; trimer of homodimers.

The catalysed reaction is a purine D-ribonucleoside + phosphate = a purine nucleobase + alpha-D-ribose 1-phosphate. It carries out the reaction a purine 2'-deoxy-D-ribonucleoside + phosphate = a purine nucleobase + 2-deoxy-alpha-D-ribose 1-phosphate. Catalyzes the reversible phosphorolytic breakdown of the N-glycosidic bond in the beta-(deoxy)ribonucleoside molecules, with the formation of the corresponding free purine bases and pentose-1-phosphate. The sequence is that of Purine nucleoside phosphorylase DeoD-type 1 from Photobacterium profundum (strain SS9).